A 102-amino-acid polypeptide reads, in one-letter code: Phosphoribosyl-ATP pyrophosphatase (102 aa).

Belongs to the PRA-PH family.

The protein resides in the cytoplasm. The catalysed reaction is 1-(5-phospho-beta-D-ribosyl)-ATP + H2O = 1-(5-phospho-beta-D-ribosyl)-5'-AMP + diphosphate + H(+). Its pathway is amino-acid biosynthesis; L-histidine biosynthesis; L-histidine from 5-phospho-alpha-D-ribose 1-diphosphate: step 2/9. The chain is Phosphoribosyl-ATP pyrophosphatase from Jannaschia sp. (strain CCS1).